A 203-amino-acid chain; its full sequence is Thymidylate kinase (203 aa).

Residue 10 to 17 (GIDGAGKS) coordinates ATP.

Belongs to the thymidylate kinase family.

It catalyses the reaction dTMP + ATP = dTDP + ADP. Functionally, phosphorylation of dTMP to form dTDP in both de novo and salvage pathways of dTTP synthesis. In Cupriavidus taiwanensis (strain DSM 17343 / BCRC 17206 / CCUG 44338 / CIP 107171 / LMG 19424 / R1) (Ralstonia taiwanensis (strain LMG 19424)), this protein is Thymidylate kinase.